Consider the following 263-residue polypeptide: MSLSPAIFSIGPVSIHWYSLAYVLGIVFAYWHLHKLDEQKIFTKNFYDSLLTATIIGIILGGRLGFVLIYDPISYINNPIEILKTWKGGMSFHGGAIGVLCAVIISCRRYNIPIFYTLDLISCGVPIGLFLGRIGNFVNGELFGRVTTMPWGMVFPESGDNLLRHPSQLYEAFFEGLLFFAIANSLFFLTRIRLYHGTLTGIAVIWYGTVRFVVEFFREPDYQVGYLWLDLTMGQLLSIFMTLLGIIVYLSALNSKFNTKSVA.

4 helical membrane passes run 7-27 (IFSI…LGIV), 50-70 (LLTA…VLIY), 85-105 (TWKG…AVII), and 112-132 (IPIF…LFLG). Arginine 133 serves as a coordination point for a 1,2-diacyl-sn-glycero-3-phospho-(1'-sn-glycerol). The next 3 helical transmembrane spans lie at 169–189 (LYEA…LFFL), 197–217 (GTLT…VEFF), and 233–253 (MGQL…LSAL).

The protein belongs to the Lgt family.

Its subcellular location is the cell membrane. It carries out the reaction L-cysteinyl-[prolipoprotein] + a 1,2-diacyl-sn-glycero-3-phospho-(1'-sn-glycerol) = an S-1,2-diacyl-sn-glyceryl-L-cysteinyl-[prolipoprotein] + sn-glycerol 1-phosphate + H(+). It functions in the pathway protein modification; lipoprotein biosynthesis (diacylglyceryl transfer). Functionally, catalyzes the transfer of the diacylglyceryl group from phosphatidylglycerol to the sulfhydryl group of the N-terminal cysteine of a prolipoprotein, the first step in the formation of mature lipoproteins. This is Phosphatidylglycerol--prolipoprotein diacylglyceryl transferase from Wolbachia sp. subsp. Brugia malayi (strain TRS).